The following is a 428-amino-acid chain: Putative FBD-associated F-box protein At5g56390 (428 aa).

An F-box domain is found at 2 to 50 (DKISQLHDELLLGILSLLPNAKDVVATMVLSKRWRYLWMMVPSLVYDDS). Residues 344-394 (CWNETSLVPEYLLPSLETFEWVDYEGTKTEKQVVAFILRIASCLKQATIVS) enclose the FBD domain.

The chain is Putative FBD-associated F-box protein At5g56390 from Arabidopsis thaliana (Mouse-ear cress).